A 112-amino-acid chain; its full sequence is Integration host factor subunit alpha (112 aa).

Belongs to the bacterial histone-like protein family. In terms of assembly, heterodimer of an alpha and a beta chain.

Functionally, this protein is one of the two subunits of integration host factor, a specific DNA-binding protein that functions in genetic recombination as well as in transcriptional and translational control. The sequence is that of Integration host factor subunit alpha from Sinorhizobium fredii (strain NBRC 101917 / NGR234).